Consider the following 151-residue polypeptide: Deoxyuridine 5'-triphosphate nucleotidohydrolase (151 aa).

Residues R70–G72, N83, L87–D89, and M97 each bind substrate.

Belongs to the dUTPase family. The cofactor is Mg(2+).

It carries out the reaction dUTP + H2O = dUMP + diphosphate + H(+). The protein operates within pyrimidine metabolism; dUMP biosynthesis; dUMP from dCTP (dUTP route): step 2/2. In terms of biological role, this enzyme is involved in nucleotide metabolism: it produces dUMP, the immediate precursor of thymidine nucleotides and it decreases the intracellular concentration of dUTP so that uracil cannot be incorporated into DNA. In Mannheimia succiniciproducens (strain KCTC 0769BP / MBEL55E), this protein is Deoxyuridine 5'-triphosphate nucleotidohydrolase.